The following is a 568-amino-acid chain: 2-succinyl-5-enolpyruvyl-6-hydroxy-3-cyclohexene-1-carboxylate synthase (568 aa).

Belongs to the TPP enzyme family. MenD subfamily. In terms of assembly, homodimer. It depends on Mg(2+) as a cofactor. Mn(2+) is required as a cofactor. The cofactor is thiamine diphosphate.

It catalyses the reaction isochorismate + 2-oxoglutarate + H(+) = 5-enolpyruvoyl-6-hydroxy-2-succinyl-cyclohex-3-ene-1-carboxylate + CO2. It participates in quinol/quinone metabolism; 1,4-dihydroxy-2-naphthoate biosynthesis; 1,4-dihydroxy-2-naphthoate from chorismate: step 2/7. It functions in the pathway cofactor biosynthesis; phylloquinone biosynthesis. Catalyzes the thiamine diphosphate-dependent decarboxylation of 2-oxoglutarate and the subsequent addition of the resulting succinic semialdehyde-thiamine pyrophosphate anion to isochorismate to yield 2-succinyl-5-enolpyruvyl-6-hydroxy-3-cyclohexene-1-carboxylate (SEPHCHC). The protein is 2-succinyl-5-enolpyruvyl-6-hydroxy-3-cyclohexene-1-carboxylate synthase of Synechococcus sp. (strain CC9902).